Consider the following 370-residue polypeptide: Trans-enoyl reductase xenG (370 aa).

The interval 1–32 (MASTGLPQLPPSQKAVIQSEKTPGAFEVSENR) is disordered. Residues 54 to 57 (CDWK), 177 to 180 (STAS), 200 to 203 (SPKN), Tyr-218, 265 to 266 (FE), and 356 to 357 (VS) contribute to the NADP(+) site.

It belongs to the zinc-containing alcohol dehydrogenase family. As to quaternary structure, monomer.

The protein operates within mycotoxin biosynthesis. Trans-enoyl reductase; part of the gene cluster that mediates the biosynthesis of xenoacremones such as xenoacremone A, a compound that shows inhibitory activity toward the PI3K/AKT signaling pathway and which has the ability to induce apoptosis of A549 lung cancer cells. Within the pathway, cooperation of the hybrid PKS-NRPS xenE and the trans-acting enoyl reductase xenG is responsible for the formation of the reduced tyrosine-nonaketide derivative. The alpha/beta hydrolase xenA then accelerates intramolecular nucleophilic attack to give a pyrrolidone derivative. Subsequently, three enzymes, xenF, xenD, and xenC, coordinately participate in the conversion to xenoacremone B. XenF catalyzes sigmatropic rearrangement to form an A-ring, which leads to an unusual intermediate with a hexane ring, which is required for the formation of the tricarbocyclic product. Epoxidation catalyzed by xenD and the formation of the paracyclophane ether catalyzed by xenC initiate a spontaneous intramolecular Diels-Alder (IMDA) reaction to yield xenoacremone B. Spontaneous hydration of xenoacremone B leads to the formation of xenoacremone A, which undergoes subsequent methylation to afford xenoacremone C. The sequence is that of Trans-enoyl reductase xenG from Xenoacremonium sinensis (Endophyte fungus).